A 205-amino-acid chain; its full sequence is Small ribosomal subunit protein uS4c (205 aa).

A disordered region spans residues 16–40 (GKLPSLTNKTSKKRKSPGQPATSFK). Residues 93–161 (MRLDNIVHRI…IQKNIESKEL (69 aa)) enclose the S4 RNA-binding domain.

The protein belongs to the universal ribosomal protein uS4 family. In terms of assembly, part of the 30S ribosomal subunit. Contacts protein S5. The interaction surface between S4 and S5 is involved in control of translational fidelity.

It localises to the plastid. Its subcellular location is the chloroplast. One of the primary rRNA binding proteins, it binds directly to 16S rRNA where it nucleates assembly of the body of the 30S subunit. In terms of biological role, with S5 and S12 plays an important role in translational accuracy. The sequence is that of Small ribosomal subunit protein uS4c (rps4) from Euglena gracilis.